Consider the following 104-residue polypeptide: Large ribosomal subunit protein bL21 (104 aa).

It belongs to the bacterial ribosomal protein bL21 family. Part of the 50S ribosomal subunit. Contacts protein L20.

Functionally, this protein binds to 23S rRNA in the presence of protein L20. This Francisella tularensis subsp. holarctica (strain FTNF002-00 / FTA) protein is Large ribosomal subunit protein bL21.